Here is a 416-residue protein sequence, read N- to C-terminus: 3-isopropylmalate dehydratase large subunit (416 aa).

[4Fe-4S] cluster contacts are provided by Cys299, Cys357, and Cys360.

This sequence belongs to the aconitase/IPM isomerase family. LeuC type 2 subfamily. Heterodimer of LeuC and LeuD. [4Fe-4S] cluster is required as a cofactor.

The catalysed reaction is (2R,3S)-3-isopropylmalate = (2S)-2-isopropylmalate. The protein operates within amino-acid biosynthesis; L-leucine biosynthesis; L-leucine from 3-methyl-2-oxobutanoate: step 2/4. Its function is as follows. Catalyzes the isomerization between 2-isopropylmalate and 3-isopropylmalate, via the formation of 2-isopropylmaleate. The sequence is that of 3-isopropylmalate dehydratase large subunit from Saccharolobus solfataricus (strain ATCC 35092 / DSM 1617 / JCM 11322 / P2) (Sulfolobus solfataricus).